We begin with the raw amino-acid sequence, 90 residues long: Small ribosomal subunit protein bS20 (90 aa).

It belongs to the bacterial ribosomal protein bS20 family.

Its function is as follows. Binds directly to 16S ribosomal RNA. This chain is Small ribosomal subunit protein bS20, found in Fusobacterium nucleatum subsp. nucleatum (strain ATCC 25586 / DSM 15643 / BCRC 10681 / CIP 101130 / JCM 8532 / KCTC 2640 / LMG 13131 / VPI 4355).